We begin with the raw amino-acid sequence, 105 residues long: Biogenesis of lysosome-related organelles complex 1 subunit SNN1 (105 aa).

Positions 70 to 105 (WKDDNERLDSLRKRVDSLKSRFQSLKLRSDKLEQRE) form a coiled coil.

This sequence belongs to the SNAPIN family. As to quaternary structure, component of the biogenesis of lysosome-related organelles complex-1 (BLOC-1).

The protein localises to the endosome. Its function is as follows. Component of the biogenesis of lysosome-related organelles complex-1 (BLOC-1), a complex involved in endosomal cargo sorting. The chain is Biogenesis of lysosome-related organelles complex 1 subunit SNN1 (SNN1) from Zygosaccharomyces rouxii (strain ATCC 2623 / CBS 732 / NBRC 1130 / NCYC 568 / NRRL Y-229).